The sequence spans 470 residues: Pyruvate kinase I (470 aa).

Arg-32 is a binding site for substrate. K(+) is bound by residues Asn-34, Ser-36, Asp-66, and Thr-67. ATP is bound at residue 34–37; the sequence is NFSH. ATP contacts are provided by Arg-73 and Lys-156. Glu-222 is a binding site for Mg(2+). Substrate-binding residues include Gly-245, Asp-246, and Thr-278. Residue Asp-246 participates in Mg(2+) binding.

The protein belongs to the pyruvate kinase family. Homotetramer. Requires Mg(2+) as cofactor. It depends on K(+) as a cofactor.

It catalyses the reaction pyruvate + ATP = phosphoenolpyruvate + ADP + H(+). Its pathway is carbohydrate degradation; glycolysis; pyruvate from D-glyceraldehyde 3-phosphate: step 5/5. This chain is Pyruvate kinase I (pykF), found in Salmonella typhi.